A 398-amino-acid chain; its full sequence is Glia-derived nexin (398 aa).

The first 19 residues, 1 to 19 (MNWHLPLFLLASVTLPSIC), serve as a signal peptide directing secretion. N-linked (GlcNAc...) asparagine glycans are attached at residues N118 and N159.

This sequence belongs to the serpin family.

Its subcellular location is the secreted. The protein localises to the extracellular space. Serine protease inhibitor with activity toward thrombin, trypsin, and urokinase. Promotes neurite extension by inhibiting thrombin. Binds heparin. The sequence is that of Glia-derived nexin (SERPINE2) from Homo sapiens (Human).